Reading from the N-terminus, the 837-residue chain is Outer membrane usher protein HifC (837 aa).

An N-terminal signal peptide occupies residues 1–26 (MKTKNFPLNKIAFACTLLLANPVAWA). A disulfide bridge links Cys-813 with Cys-833.

Belongs to the fimbrial export usher family.

It localises to the cell outer membrane. In terms of biological role, essential for piliation. This chain is Outer membrane usher protein HifC (hifC), found in Haemophilus influenzae.